Here is a 227-residue protein sequence, read N- to C-terminus: Urease accessory protein UreF (227 aa).

This sequence belongs to the UreF family. UreD, UreF and UreG form a complex that acts as a GTP-hydrolysis-dependent molecular chaperone, activating the urease apoprotein by helping to assemble the nickel containing metallocenter of UreC. The UreE protein probably delivers the nickel.

It is found in the cytoplasm. Required for maturation of urease via the functional incorporation of the urease nickel metallocenter. This Actinobacillus pleuropneumoniae (Haemophilus pleuropneumoniae) protein is Urease accessory protein UreF.